Reading from the N-terminus, the 85-residue chain is Toxin To9 (85 aa).

The signal sequence occupies residues 1 to 19 (MNYSTLIAVASLLTAGTES). An LCN-type CS-alpha/beta domain is found at 21–81 (KDGYPVKEGD…AAIKGYGRCR (61 aa)). 4 cysteine pairs are disulfide-bonded: cysteine 31–cysteine 80, cysteine 35–cysteine 56, cysteine 42–cysteine 63, and cysteine 46–cysteine 65. A Proline amide modification is found at proline 82.

The protein belongs to the long (4 C-C) scorpion toxin superfamily. Sodium channel inhibitor family. Alpha subfamily. In terms of tissue distribution, expressed by the venom gland.

The protein localises to the secreted. Functionally, alpha toxins bind voltage-independently at site-3 of sodium channels (Nav) and inhibit the inactivation of the activated channels, thereby blocking neuronal transmission. The protein is Toxin To9 of Tityus obscurus (Amazonian scorpion).